Here is a 729-residue protein sequence, read N- to C-terminus: Polyribonucleotide nucleotidyltransferase (729 aa).

The Mg(2+) site is built by aspartate 516 and aspartate 522. The region spanning 581–641 (PSTEHFSINP…EKVAAAKEHI (61 aa)) is the KH domain. Residues 658–725 (GKTYVGKVKK…KGKKVELATP (68 aa)) enclose the S1 motif domain.

It belongs to the polyribonucleotide nucleotidyltransferase family. Mg(2+) serves as cofactor.

The protein resides in the cytoplasm. It catalyses the reaction RNA(n+1) + phosphate = RNA(n) + a ribonucleoside 5'-diphosphate. Functionally, involved in mRNA degradation. Catalyzes the phosphorolysis of single-stranded polyribonucleotides processively in the 3'- to 5'-direction. This chain is Polyribonucleotide nucleotidyltransferase, found in Sulfurovum sp. (strain NBC37-1).